Here is a 411-residue protein sequence, read N- to C-terminus: S-adenosylmethionine synthase (411 aa).

An ATP-binding site is contributed by His15. Asp17 contributes to the Mg(2+) binding site. Glu43 contributes to the K(+) binding site. Residues Glu56 and Gln99 each coordinate L-methionine. The segment at Gln99–Thr109 is flexible loop. Residues Asp179 to Lys181, Asp260, Arg266 to Lys267, Ala283, and Lys287 contribute to the ATP site. Residue Asp260 participates in L-methionine binding. Residue Lys291 participates in L-methionine binding.

It belongs to the AdoMet synthase family. In terms of assembly, homotetramer; dimer of dimers. The cofactor is Mg(2+). It depends on K(+) as a cofactor.

It is found in the cytoplasm. The enzyme catalyses L-methionine + ATP + H2O = S-adenosyl-L-methionine + phosphate + diphosphate. The protein operates within amino-acid biosynthesis; S-adenosyl-L-methionine biosynthesis; S-adenosyl-L-methionine from L-methionine: step 1/1. Its function is as follows. Catalyzes the formation of S-adenosylmethionine (AdoMet) from methionine and ATP. The overall synthetic reaction is composed of two sequential steps, AdoMet formation and the subsequent tripolyphosphate hydrolysis which occurs prior to release of AdoMet from the enzyme. The chain is S-adenosylmethionine synthase from Corynebacterium jeikeium (strain K411).